The sequence spans 596 residues: uncharacterized protein (596 aa).

The first 20 residues, 1–20 (MRYKPLLLALMLVFSTPAVA), serve as a signal peptide directing secretion. Basic and acidic residues-rich tracts occupy residues 25-90 (AHNR…KEAT) and 161-184 (VRSDKNGKAVKQDKKYREEKNAKT). The segment at 25 to 184 (AHNRSAEVKK…KYREEKNAKT (160 aa)) is disordered. Coiled coils occupy residues 177–281 (REEK…RFVS) and 318–454 (NREV…TAED).

Belongs to the peptidase M23B family.

This is an uncharacterized protein from Neisseria meningitidis serogroup B (strain ATCC BAA-335 / MC58).